A 235-amino-acid polypeptide reads, in one-letter code: Flavonoid 3',5'-methyltransferase (235 aa).

S-adenosyl-L-methionine-binding positions include valine 51, glutamate 73, 75 to 76, serine 81, aspartate 99, and alanine 128; that span reads GV. Aspartate 151 provides a ligand contact to a divalent metal cation. S-adenosyl-L-methionine is bound at residue aspartate 153. Positions 177 and 178 each coordinate a divalent metal cation.

This sequence belongs to the class I-like SAM-binding methyltransferase superfamily. Cation-dependent O-methyltransferase family. CCoAMT subfamily. Requires a divalent metal cation as cofactor.

Its subcellular location is the cytoplasm. The enzyme catalyses S-adenosyl-L-methionine + a 3'-hydroxyflavonoid = S-adenosyl-L-homocysteine + a 3'-methoxyflavonoid.. It carries out the reaction S-adenosyl-L-methionine + a 5'-hydroxy-3'-methoxyflavonoid = S-adenosyl-L-homocysteine + a 3',5'-dimethoxyflavonoid.. It participates in pigment biosynthesis; anthocyanin biosynthesis. Functionally, mediates O-methylation of anthocyanins. Anthocyanins are major pigments in grapes: at ripening initiation in red grapevine berries, the exocarp turns color from green to red and then to purple due to the accumulation and extent of methylation of anthocyanins. Catalyzes both 3' and 5' O-methylation of anthocyanins, with a preference for glycosylated substrates. Active on both anthocyanins and flavonols in vitro. Most active with delphinidin 3-glucoside but also acts on cyanidin 3-glucoside, cyanidin, myricetin, quercetin and quercetin 3-glucoside. Not able to methylate flavan type skeletons with chiral centers, such as catechins or dihydroquercetin. The sequence is that of Flavonoid 3',5'-methyltransferase (FAOMT) from Vitis vinifera (Grape).